We begin with the raw amino-acid sequence, 184 residues long: Photosystem I assembly protein Ycf4 (184 aa).

A run of 2 helical transmembrane segments spans residues 22-42 and 57-77; these read FFWAFILFLGSLGFLLVGTSS and IIFFPQGIVMSFYGIAGLFIS.

This sequence belongs to the Ycf4 family.

It is found in the plastid. It localises to the chloroplast thylakoid membrane. Seems to be required for the assembly of the photosystem I complex. The polypeptide is Photosystem I assembly protein Ycf4 (Aethionema cordifolium (Lebanon stonecress)).